A 528-amino-acid chain; its full sequence is Proteinaceous RNase P 2 (528 aa).

Residues 1–16 (MAASDQHRSRRHDESS) are compositionally biased toward basic and acidic residues. The interval 1 to 28 (MAASDQHRSRRHDESSSRPNKKKKVSRN) is disordered. PPR repeat units follow at residues 29-64 (PETN…EVRL), 72-107 (LLYL…GISP), 108-142 (NEAS…GGVS), and 145-179 (RLRT…GIAL). One can recognise a PRORP domain in the interval 275-511 (VSSTGRCLSC…NEESSRTWMC (237 aa)). Zn(2+) is bound by residues cysteine 281 and cysteine 284. Aspartate 343, aspartate 421, aspartate 422, and aspartate 440 together coordinate Mg(2+). Histidine 494 and cysteine 511 together coordinate Zn(2+).

It belongs to the PPR family. P subfamily. Monomer; forms dimers in crystallo but monomers in solution. Requires Mg(2+) as cofactor.

The protein resides in the nucleus. It carries out the reaction Endonucleolytic cleavage of RNA, removing 5'-extranucleotides from tRNA precursor.. Its function is as follows. Endonuclease RNase P responsible for the 5' maturation of tRNA precursors. Preferentially binds precursor tRNAs containing short 5' leaders and 3' trailers. Also involved in the maturation of mRNA and small nucleolar RNA (snoRNA). This is Proteinaceous RNase P 2 (PRORP2) from Arabidopsis thaliana (Mouse-ear cress).